Consider the following 143-residue polypeptide: Aspartate 1-decarboxylase (143 aa).

The active-site Schiff-base intermediate with substrate; via pyruvic acid is the S25. At S25 the chain carries Pyruvic acid (Ser). T57 is a binding site for substrate. Catalysis depends on Y58, which acts as the Proton donor. Position 73–75 (G73–A75) interacts with substrate.

This sequence belongs to the PanD family. Heterooctamer of four alpha and four beta subunits. It depends on pyruvate as a cofactor. In terms of processing, is synthesized initially as an inactive proenzyme, which is activated by self-cleavage at a specific serine bond to produce a beta-subunit with a hydroxyl group at its C-terminus and an alpha-subunit with a pyruvoyl group at its N-terminus.

It localises to the cytoplasm. It catalyses the reaction L-aspartate + H(+) = beta-alanine + CO2. The protein operates within cofactor biosynthesis; (R)-pantothenate biosynthesis; beta-alanine from L-aspartate: step 1/1. Functionally, catalyzes the pyruvoyl-dependent decarboxylation of aspartate to produce beta-alanine. The polypeptide is Aspartate 1-decarboxylase (Mycobacterium ulcerans (strain Agy99)).